An 81-amino-acid chain; its full sequence is Short neurotoxin 2 (81 aa).

The signal sequence occupies residues 1-21; the sequence is MKTLLLTLVVVTIVCLDLGYT. Disulfide bonds link C24–C43, C38–C60, C62–C73, and C74–C79.

Belongs to the three-finger toxin family. Short-chain subfamily. Type I alpha-neurotoxin sub-subfamily. Expressed by the venom gland.

The protein resides in the secreted. In terms of biological role, binds to muscle nicotinic acetylcholine receptor (nAChR) and inhibit acetylcholine from binding to the receptor, thereby impairing neuromuscular transmission. This chain is Short neurotoxin 2, found in Hydrophis hardwickii (Hardwick's spine-bellied seasnake).